The sequence spans 358 residues: 3-dehydroquinate synthase (358 aa).

Residues 70–75, 104–108, 128–129, lysine 141, lysine 150, and 168–171 each bind NAD(+); these read DGEQFK, GVIGD, TT, and CLHT. Positions 183, 246, and 263 each coordinate Zn(2+).

The protein belongs to the sugar phosphate cyclases superfamily. Dehydroquinate synthase family. The cofactor is Co(2+). Zn(2+) is required as a cofactor. NAD(+) serves as cofactor.

The protein resides in the cytoplasm. It catalyses the reaction 7-phospho-2-dehydro-3-deoxy-D-arabino-heptonate = 3-dehydroquinate + phosphate. The protein operates within metabolic intermediate biosynthesis; chorismate biosynthesis; chorismate from D-erythrose 4-phosphate and phosphoenolpyruvate: step 2/7. Its function is as follows. Catalyzes the conversion of 3-deoxy-D-arabino-heptulosonate 7-phosphate (DAHP) to dehydroquinate (DHQ). The sequence is that of 3-dehydroquinate synthase from Shewanella baltica (strain OS195).